The following is a 224-amino-acid chain: 4'-phosphopantetheinyl transferase ffp (224 aa).

3 residues coordinate Mg(2+): Asp-107, Glu-109, and Glu-151. The peptidyl carrier protein binding stretch occupies residues 158-189 (GKGLSLPLDSFSVRLHEDGRVSVELPEHHTPC).

It belongs to the P-Pant transferase superfamily. Gsp/Sfp/HetI/AcpT family. The cofactor is Mg(2+).

The catalysed reaction is apo-[peptidyl-carrier protein] + CoA = holo-[peptidyl-carrier protein] + adenosine 3',5'-bisphosphate + H(+). In terms of biological role, may activate the peptidyl carrier protein (PCP) domains of fengycin synthase by transferring the 4'-phosphopantetheinyl moiety of coenzyme A (CoA) to a serine residue. The chain is 4'-phosphopantetheinyl transferase ffp (ffp) from Bacillus subtilis.